Here is an 871-residue protein sequence, read N- to C-terminus: Envelope glycoprotein gp160 (871 aa).

The signal sequence occupies residues 1–21 (MKNLIGITLILIITILGIGFS). Topologically, residues 22-684 (TYYTTVFYGV…DITQWLWYIK (663 aa)) are extracellular. Cys-43 and Cys-63 are oxidised to a cystine. N-linked (GlcNAc...) asparagine; by host glycosylation is found at Asn-77, Asn-124, Asn-127, Asn-142, Asn-153, Asn-157, Asn-185, Asn-194, Asn-229, Asn-238, Asn-259, Asn-273, Asn-285, Asn-289, Asn-297, Asn-329, Asn-345, Asn-352, Asn-384, Asn-387, Asn-395, Asn-398, Asn-438, Asn-451, and Asn-496. Disulfide bonds link Cys-108-Cys-202, Cys-115-Cys-193, Cys-120-Cys-154, Cys-215-Cys-244, and Cys-225-Cys-236. Positions 120-153 (CTMTNTTNKTLNSATTTLTPTVNLSSIPNYEVYN) are V1. The V2 stretch occupies residues 154–193 (CSFNQTTEFRDKKKQIYSLFYREDIVKEDGNNNSYYLHNC). The tract at residues 292 to 325 (CERTGNNTRGQVQIGPGMTFYNIENVVGDTRKAY) is V3. A disulfide bridge connects residues Cys-292 and Cys-326. 2 disulfides stabilise this stretch: Cys-376/Cys-435 and Cys-383/Cys-408. Positions 383-408 (CNLTNWTNTWTANRTNNTHGTLVAPC) are V4. Residues 451–458 (NNSYTPQF) are V5. The fusion peptide stretch occupies residues 502–522 (RDVGIGLLFLGFLSAAGSTMG). Residues 567–583 (LQARMLAVEKYIRDQQL) form an immunosuppression region. Residues Asn-602, Asn-613, Asn-626, and Asn-638 are each glycosylated (N-linked (GlcNAc...) asparagine; by host). The stretch at 645-668 (SLLEKAQTQQEKNKQELLELDKWS) forms a coiled coil. Residues 663 to 684 (ELDKWSSLWDWFDITQWLWYIK) form an MPER; binding to GalCer region. A helical membrane pass occupies residues 685–705 (IAIIIVAGLVGLRILMFIVNV). Residues 706 to 871 (VKQVRQGYTP…IRQGLELALN (166 aa)) lie on the Cytoplasmic side of the membrane. Positions 713–716 (YTPL) match the YXXL motif; contains endocytosis signal motif.

The mature envelope protein (Env) consists of a homotrimer of non-covalently associated gp120-gp41 heterodimers. The resulting complex protrudes from the virus surface as a spike. Interacts with host CD4 and CCR5. Gp120 also interacts with the C-type lectins CD209/DC-SIGN and CLEC4M/DC-SIGNR (collectively referred to as DC-SIGN(R)). As to quaternary structure, the mature envelope protein (Env) consists of a homotrimer of non-covalently associated gp120-gp41 heterodimers. The resulting complex protrudes from the virus surface as a spike. Specific enzymatic cleavages in vivo yield mature proteins. Envelope glycoproteins are synthesized as an inactive precursor that is heavily N-glycosylated and processed likely by host cell furin in the Golgi to yield the mature SU and TM proteins. The cleavage site between SU and TM requires the minimal sequence [KR]-X-[KR]-R.

It localises to the virion membrane. The protein resides in the host cell membrane. It is found in the host endosome membrane. In terms of biological role, the surface protein gp120 (SU) attaches the virus to the host lymphoid cell by binding to the primary receptor CD4. This interaction induces a structural rearrangement creating a high affinity binding site for a chemokine coreceptor like CCR5. This peculiar 2 stage receptor-interaction strategy allows gp120 to maintain the highly conserved coreceptor-binding site in a cryptic conformation, protected from neutralizing antibodies. These changes are transmitted to the transmembrane protein gp41 and are thought to activate its fusogenic potential by unmasking its fusion peptide. Its function is as follows. Surface protein gp120 (SU) may target the virus to gut-associated lymphoid tissue (GALT) by binding host ITGA4/ITGB7 (alpha-4/beta-7 integrins), a complex that mediates T-cell migration to the GALT. Interaction between gp120 and ITGA4/ITGB7 would allow the virus to enter GALT early in the infection, infecting and killing most of GALT's resting CD4+ T-cells. This T-cell depletion is believed to be the major insult to the host immune system leading to AIDS. Functionally, the surface protein gp120 is a ligand for CD209/DC-SIGN and CLEC4M/DC-SIGNR, which are respectively found on dendritic cells (DCs), and on endothelial cells of liver sinusoids and lymph node sinuses. These interactions allow capture of viral particles at mucosal surfaces by these cells and subsequent transmission to permissive cells. DCs are professional antigen presenting cells, critical for host immunity by inducing specific immune responses against a broad variety of pathogens. They act as sentinels in various tissues where they take up antigen, process it, and present it to T-cells following migration to lymphoid organs. SIV subverts the migration properties of dendritic cells to gain access to CD4+ T-cells in lymph nodes. Virus transmission to permissive T-cells occurs either in trans (without DCs infection, through viral capture and transmission), or in cis (following DCs productive infection, through the usual CD4-gp120 interaction), thereby inducing a robust infection. In trans infection, bound virions remain infectious over days and it is proposed that they are not degraded, but protected in non-lysosomal acidic organelles within the DCs close to the cell membrane thus contributing to the viral infectious potential during DCs' migration from the periphery to the lymphoid tissues. On arrival at lymphoid tissues, intact virions recycle back to DCs' cell surface allowing virus transmission to CD4+ T-cells. Virion capture also seems to lead to MHC-II-restricted viral antigen presentation, and probably to the activation of SIV-specific CD4+ cells. The transmembrane protein gp41 (TM) acts as a class I viral fusion protein. Under the current model, the protein has at least 3 conformational states: pre-fusion native state, pre-hairpin intermediate state, and post-fusion hairpin state. During fusion of viral and target intracellular membranes, the coiled coil regions (heptad repeats) assume a trimer-of-hairpins structure, positioning the fusion peptide in close proximity to the C-terminal region of the ectodomain. The formation of this structure appears to drive apposition and subsequent fusion of viral and target cell membranes. Complete fusion occurs in host cell endosomes. The virus undergoes clathrin-dependent internalization long before endosomal fusion, thus minimizing the surface exposure of conserved viral epitopes during fusion and reducing the efficacy of inhibitors targeting these epitopes. Membranes fusion leads to delivery of the nucleocapsid into the cytoplasm. In terms of biological role, the envelope glycoprotein gp160 precursor down-modulates cell surface CD4 antigen by interacting with it in the endoplasmic reticulum and blocking its transport to the cell surface. Its function is as follows. The gp120-gp41 heterodimer allows rapid transcytosis of the virus through CD4 negative cells such as simple epithelial monolayers of the intestinal, rectal and endocervical epithelial barriers. Both gp120 and gp41 specifically recognize glycosphingolipids galactosyl-ceramide (GalCer) or 3' sulfo-galactosyl-ceramide (GalS) present in the lipid rafts structures of epithelial cells. Binding to these alternative receptors allows the rapid transcytosis of the virus through the epithelial cells. This transcytotic vesicle-mediated transport of virions from the apical side to the basolateral side of the epithelial cells does not involve infection of the cells themselves. This is Envelope glycoprotein gp160 from Simian immunodeficiency virus (isolate TAN1) (SIV-cpz).